Here is a 26-residue protein sequence, read N- to C-terminus: 83 kDa hypersensitivity protein (26 aa).

The disordered stretch occupies residues 1-26 (FTPEDFISAPRRGEAIPDPKGELAVF). Residues 11 to 26 (RRGEAIPDPKGELAVF) are compositionally biased toward basic and acidic residues.

The protein is 83 kDa hypersensitivity protein of Trichophyton tonsurans (Scalp ringworm fungus).